A 542-amino-acid chain; its full sequence is MSADDVVYDLVGLGFGPANIAIGAALTEKWQQDPTFSIKNTLFIEKHEVFRWHPGMLLPDAKMQISFLKDLATLRTPNSPYTFLSYLHSEDRLLSFINRGSTVPSRKEYSDYLAWAAQKVQDNGVKVKFGHEIIALDDGPDGTIEVRYRNVRTQEETLIRARDLIIAPGGTPCIPDFLQPFVNHPRVSHSSSYALKIGDMFDSLNHLSRPLRVAIIGSGQSAAEVTIDVRNRLASIPSTGRHEVDMLIRKGSLKPSDDSPFANEIFDPASTDAWFSTGSKHLRDAILAEYKQTNYSVVNPRTLEALYEIIYGQRLNAAVSRRTNVEEPSDPVINIKPYTSVLSIQTVGSQGERVRGELLLSPEGASASKDEGFVMVTKHMMTGAESQTNYDVILYATGYQRTAWVELFKNTGIAKHFGITPSTSKVVLRPSADLVGGRQHQEFFHDSSPSTASSSTVSTPPTSPETSRFSSPISSRIVSQDLYLSRSYQLLPKDGENTLRPRVYLQGVEEATHGLSDTLLSVLGVRAGEVVADLASRYHSSA.

FAD-binding positions include Glu45–His53 and Gln64. Lys69 lines the substrate pocket. Position 218–221 (Ser218–Ser221) interacts with NADP(+). Substrate-binding positions include Asn263–Phe266 and Asn294. Asn294–Ser296 contributes to the NADP(+) binding site. The disordered stretch occupies residues Phe443–Pro472. Low complexity predominate over residues Ser447–Pro472. FAD is bound at residue Thr518–Leu520. Substrate is bound at residue Ser521.

It belongs to the lysine N(6)-hydroxylase/L-ornithine N(5)-oxygenase family. As to quaternary structure, homotetramer. Requires FAD as cofactor.

It carries out the reaction L-ornithine + NADPH + O2 = N(5)-hydroxy-L-ornithine + NADP(+) + H2O. The enzyme catalyses L-ornithine + NADH + O2 = N(5)-hydroxy-L-ornithine + NAD(+) + H2O. It participates in siderophore biosynthesis. Functionally, L-ornithine N(5)-monooxygenase; part of the gene cluster that mediates the biosynthesis of coprinoferrin, an acylated tripeptide hydroxamate siderophore. The biosynthesis of coprinoferrin depends on the hydroxylation of ornithine to N(5)-hydroxyornithine, catalyzed by the monooxygenase cpf2. The second step, the acylation of N(5)-hydroxy-L-ornithine to yield N(5)-hexanoyl-N(5)-hydroxyl-L-ornithine is catalyzed by a not yet identified acyltransferase. Finally, assembly of coprinoferrin is catalyzed by the nonribosomal peptide synthase (NRPS) cpf1 via amide bond formation between three N(5)-hexanoyl-N(5)-hydroxyl-L-ornithine molecules to release the linear trimer. Interestingly, proteins seemingly not directly related to biosynthesis, such as transcription factors, replication factors, and autophagy-related proteins, are conserved among the clusters homologous to the coprinoferrin cluster, suggesting that the cluster may also play developmental and cell biological functions. This Coprinopsis cinerea (strain Okayama-7 / 130 / ATCC MYA-4618 / FGSC 9003) (Inky cap fungus) protein is L-ornithine N(5)-monooxygenase.